Here is a 296-residue protein sequence, read N- to C-terminus: Release factor glutamine methyltransferase (296 aa).

S-adenosyl-L-methionine is bound by residues 133 to 137 (GTGSG), Asp-156, and Asn-201. Residue 201–204 (NPPY) coordinates substrate.

The protein belongs to the protein N5-glutamine methyltransferase family. PrmC subfamily.

The enzyme catalyses L-glutaminyl-[peptide chain release factor] + S-adenosyl-L-methionine = N(5)-methyl-L-glutaminyl-[peptide chain release factor] + S-adenosyl-L-homocysteine + H(+). Its function is as follows. Methylates the class 1 translation termination release factors RF1/PrfA and RF2/PrfB on the glutamine residue of the universally conserved GGQ motif. This chain is Release factor glutamine methyltransferase, found in Rhodopirellula baltica (strain DSM 10527 / NCIMB 13988 / SH1).